We begin with the raw amino-acid sequence, 314 residues long: Melanoma-associated antigen 6 (314 aa).

The span at 1–20 shows a compositional bias: basic and acidic residues; it reads MPLEQRSQHCKPEEGLEARG. The segment at 1 to 99 is disordered; the sequence is MPLEQRSQHC…QEEEGPSTFP (99 aa). Over residues 21–44 the composition is skewed to low complexity; it reads EALGLVGAQAPATEEQEAASSSST. Residues 65 to 87 are compositionally biased toward polar residues; that stretch reads PQGASSLPTTMNYPLWSQSYEDS. In terms of domain architecture, MAGE spans 109–308; sequence LSRKVAKLVH…ISYPLLHEWA (200 aa).

Interacts with TRIM28. Post-translationally, ubiquitinated by the DCX(DCAF12) complex specifically recognizes the diglutamate (Glu-Glu) at the C-terminus, leading to its degradation. Expressed in many tumors of several types, such as melanoma, head and neck squamous cell carcinoma, lung carcinoma and breast carcinoma, but not in normal tissues except for testes.

Its function is as follows. Activator of ubiquitin ligase activity of RING-type zinc finger-containing E3 ubiquitin-protein ligases that acts as a repressor of autophagy. May enhance ubiquitin ligase activity of TRIM28 and stimulate p53/TP53 ubiquitination by TRIM28. Proposed to act through recruitment and/or stabilization of the Ubl-conjugating enzyme (E2) at the E3:substrate complex. May play a role in tumor transformation or aspects of tumor progression. In vitro promotes cell viability in melanoma cell lines. The sequence is that of Melanoma-associated antigen 6 from Homo sapiens (Human).